The following is a 255-amino-acid chain: 5'-nucleotidase SurE (255 aa).

Residues Asp8, Asp9, Ser39, and Asn91 each contribute to the a divalent metal cation site.

It belongs to the SurE nucleotidase family. It depends on a divalent metal cation as a cofactor.

Its subcellular location is the cytoplasm. The enzyme catalyses a ribonucleoside 5'-phosphate + H2O = a ribonucleoside + phosphate. In terms of biological role, nucleotidase that shows phosphatase activity on nucleoside 5'-monophosphates. This Acinetobacter baylyi (strain ATCC 33305 / BD413 / ADP1) protein is 5'-nucleotidase SurE.